We begin with the raw amino-acid sequence, 660 residues long: MKTVVFAYHDMGCLGIEALLAAGYEISAIFTHTDNPGEKAFYGSVARLAAERGIPVYAPDNVNHPLWVERIAQLSPEVIFSFYYRHLICDEILQLAPRGAFNLHGSLLPKYRGRAPLNWVLVNGETETGVTLHRMVKRADAGAIVAQLRVAIAPDDIAITLHHKLCHAARQLLEQTLPAIKHGNILEIAQRENEATCFGRRTPDDSFLEWHKSASVLHNMVRAVADPWPGAFSYVGNQKFTVWSSRVHPHASKAQPGSVISVAPLLIACGDGALEIVTGQAGDGITMQGSQLAQTLGLVQGSRLNSQPACAARRRTRVLILGVNGFIGNHLTERLLREDHYEVYGLDIGSDAISRFLNHPHFHFVEGDISIHSEWIEYHVKKCDVVLPLVAIATPIEYTRNPLRVFELDFEENLRIIRYCVKYRKRIIFPSTSEVYGMCSDKYFDEDHSNLIVGPVNKPRWIYSVSKQLLDRVIWAYGEKEGLQFTLFRPFNWMGPRLDNLNAARIGSSRAITQLILNLVEGSPIKLIDGGKQKRCFTDIRDGIEALYRIIENAGNRCDGEIINIGNPENEASIEELGEMLLASFEKHPLRHYFPPFAGFRVVESSSYYGKGYQDVEHRKPSIRNARRCLNWEPKIDMQETIDETLDFFLRTVDLTDKPS.

The tract at residues 1 to 304 (MKTVVFAYHD…TLGLVQGSRL (304 aa)) is formyltransferase ArnAFT. 86–88 (HLI) contributes to the (6R)-10-formyltetrahydrofolate binding site. The active-site Proton donor; for formyltransferase activity is the His-104. (6R)-10-formyltetrahydrofolate is bound by residues Arg-114 and 136-140 (VKRAD). The dehydrogenase ArnADH stretch occupies residues 314–660 (RRTRVLILGV…RTVDLTDKPS (347 aa)). NAD(+)-binding positions include Asp-347 and 368 to 369 (DI). UDP-alpha-D-glucuronate contacts are provided by residues Ala-393, Tyr-398, and 432–433 (TS). Catalysis depends on Glu-434, which acts as the Proton acceptor; for decarboxylase activity. UDP-alpha-D-glucuronate-binding positions include Arg-460, Asn-492, 526-535 (KLIDGGKQKR), and Tyr-613. Residue Arg-619 is the Proton donor; for decarboxylase activity of the active site.

The protein in the N-terminal section; belongs to the Fmt family. UDP-L-Ara4N formyltransferase subfamily. It in the C-terminal section; belongs to the NAD(P)-dependent epimerase/dehydratase family. UDP-glucuronic acid decarboxylase subfamily. In terms of assembly, homohexamer, formed by a dimer of trimers.

It catalyses the reaction UDP-alpha-D-glucuronate + NAD(+) = UDP-beta-L-threo-pentopyranos-4-ulose + CO2 + NADH. It carries out the reaction UDP-4-amino-4-deoxy-beta-L-arabinose + (6R)-10-formyltetrahydrofolate = UDP-4-deoxy-4-formamido-beta-L-arabinose + (6S)-5,6,7,8-tetrahydrofolate + H(+). The protein operates within nucleotide-sugar biosynthesis; UDP-4-deoxy-4-formamido-beta-L-arabinose biosynthesis; UDP-4-deoxy-4-formamido-beta-L-arabinose from UDP-alpha-D-glucuronate: step 1/3. It participates in nucleotide-sugar biosynthesis; UDP-4-deoxy-4-formamido-beta-L-arabinose biosynthesis; UDP-4-deoxy-4-formamido-beta-L-arabinose from UDP-alpha-D-glucuronate: step 3/3. Its pathway is bacterial outer membrane biogenesis; lipopolysaccharide biosynthesis. Its function is as follows. Bifunctional enzyme that catalyzes the oxidative decarboxylation of UDP-glucuronic acid (UDP-GlcUA) to UDP-4-keto-arabinose (UDP-Ara4O) and the addition of a formyl group to UDP-4-amino-4-deoxy-L-arabinose (UDP-L-Ara4N) to form UDP-L-4-formamido-arabinose (UDP-L-Ara4FN). The modified arabinose is attached to lipid A and is required for resistance to polymyxin and cationic antimicrobial peptides. The sequence is that of Bifunctional polymyxin resistance protein ArnA from Escherichia coli O1:K1 / APEC.